The following is a 354-amino-acid chain: Dye-decolorizing peroxidase (354 aa).

Asp165 functions as the Proton acceptor in the catalytic mechanism. His238 provides a ligand contact to heme. The tract at residues 312 to 335 (GLFFSPTVDFLDDPPPLPAPGTPA) is targeting peptide. A compositionally biased stretch (pro residues) spans 324-337 (DPPPLPAPGTPAAP). The interval 324–354 (DPPPLPAPGTPAAPPARNGSLSIGSLKGTTR) is disordered. Residues 342–354 (GSLSIGSLKGTTR) are compositionally biased toward polar residues.

This sequence belongs to the DyP-type peroxidase family. As to quaternary structure, found in a complex with type 1 encapsulin, strongly suggesting it is found in a type 1 encapsulin nanocompartment. Homotetramer, presumably also in the type 1 encapsulin nanocompartment. The cofactor is heme b.

The protein resides in the encapsulin nanocompartment. It localises to the cell membrane. The catalysed reaction is 2 a phenolic donor + H2O2 = 2 a phenolic radical donor + 2 H2O. Its function is as follows. Cargo protein of a type 1 encapsulin nanocompartment. A heme-dependent peroxidase. This cargo-loaded encapsulin nanocompartment is probably involved in protection against oxidative damage. In Mycolicibacterium paratuberculosis (strain ATCC BAA-968 / K-10) (Mycobacterium paratuberculosis), this protein is Dye-decolorizing peroxidase.